The following is a 149-amino-acid chain: 3-dehydroquinate dehydratase (149 aa).

Residue Tyr-26 is the Proton acceptor of the active site. 3 residues coordinate substrate: Asn-77, His-83, and Asp-90. The active-site Proton donor is the His-103. Substrate contacts are provided by residues 104 to 105 (LS) and Arg-114.

The protein belongs to the type-II 3-dehydroquinase family. In terms of assembly, homododecamer.

The catalysed reaction is 3-dehydroquinate = 3-dehydroshikimate + H2O. The protein operates within metabolic intermediate biosynthesis; chorismate biosynthesis; chorismate from D-erythrose 4-phosphate and phosphoenolpyruvate: step 3/7. Catalyzes a trans-dehydration via an enolate intermediate. The chain is 3-dehydroquinate dehydratase from Aeromonas salmonicida (strain A449).